Consider the following 430-residue polypeptide: Putative ABC transporter periplasmic-binding protein YcjN (430 aa).

The N-terminal stretch at 1-19 is a signal peptide; the sequence is MIKSKIVLLSALVSCALIS.

It belongs to the bacterial solute-binding protein 1 family.

Its subcellular location is the periplasm. In terms of biological role, probably part of the binding-protein-dependent transport system YcjNOP. This is Putative ABC transporter periplasmic-binding protein YcjN (ycjN) from Escherichia coli (strain K12).